A 205-amino-acid polypeptide reads, in one-letter code: Thymidylate kinase (205 aa).

11-18 (GPEGSGKT) provides a ligand contact to ATP.

It belongs to the thymidylate kinase family.

It catalyses the reaction dTMP + ATP = dTDP + ADP. Phosphorylation of dTMP to form dTDP in both de novo and salvage pathways of dTTP synthesis. In Clostridium novyi (strain NT), this protein is Thymidylate kinase.